The sequence spans 182 residues: Plasmolipin (182 aa).

The Cytoplasmic segment spans residues methionine 1–serine 35. The residue at position 9 (serine 9) is a Phosphoserine. Residues phenylalanine 32–arginine 166 form the MARVEL domain. The helical transmembrane segment at arginine 36–alanine 56 threads the bilayer. Topologically, residues aspartate 57–tryptophan 68 are extracellular. A helical membrane pass occupies residues valine 69–phenylalanine 89. The Cytoplasmic portion of the chain corresponds to glutamine 90 to proline 99. Residues tryptophan 100–isoleucine 120 traverse the membrane as a helical segment. Residues alanine 121–alanine 141 lie on the Extracellular side of the membrane. The chain crosses the membrane as a helical span at residues alanine 142–tyrosine 162. Over glutamine 163 to alanine 182 the chain is Cytoplasmic.

The protein belongs to the MAL family. In terms of assembly, forms oligomers. Phosphorylated.

Its subcellular location is the cell membrane. The protein resides in the myelin membrane. The protein localises to the apical cell membrane. It is found in the golgi apparatus. Its function is as follows. Main component of the myelin sheath that plays an important role in myelin membrane biogenesis and myelination. Plays an essential function in apical endocytosis. Regulates epithelial development through the regulation of apical endocytosis. Part of the intracellular machinery that mediates basolateral-to-apical transport of ICAM-1, an essential adhesion receptor in epithelial cells, from the subapical compartment in hepatic epithelial cells. The chain is Plasmolipin from Homo sapiens (Human).